The sequence spans 201 residues: Segregation and condensation protein B (201 aa).

The protein belongs to the ScpB family. Homodimer. Homodimerization may be required to stabilize the binding of ScpA to the Smc head domains. Component of a cohesin-like complex composed of ScpA, ScpB and the Smc homodimer, in which ScpA and ScpB bind to the head domain of Smc. The presence of the three proteins is required for the association of the complex with DNA.

The protein localises to the cytoplasm. Its function is as follows. Participates in chromosomal partition during cell division. May act via the formation of a condensin-like complex containing Smc and ScpA that pull DNA away from mid-cell into both cell halves. This Enterococcus faecalis (strain ATCC 700802 / V583) protein is Segregation and condensation protein B.